The primary structure comprises 773 residues: Disintegrin and metalloproteinase domain-containing protein 11 (773 aa).

The N-terminal stretch at 1–24 (MRRLRRWAIAALLLLPLLPPPGLG) is a signal peptide. A propeptide spanning residues 25–229 (ALGPRGALHW…PNWPKLRRKR (205 aa)) is cleaved from the precursor. The segment at 36–82 (SSAHVGSPESPEGSEVTEPSRLVRQSSGGEVRKPQLDTRVRQDPPRG) is disordered. Positions 65–79 (EVRKPQLDTRVRQDP) are enriched in basic and acidic residues. Asparagine 100 and asparagine 167 each carry an N-linked (GlcNAc...) asparagine glycan. Residues 230 to 738 (QVRRGHPTVH…ERYKGPSGTN (509 aa)) are Extracellular-facing. Residues 243-442 (KYVELIVIND…GGGSCLFNKP (200 aa)) form the Peptidase M12B domain. The tract at residues 336-773 (GRTFQSTSSG…NIRRGRSGGA (438 aa)) is required for localization to cerebellar cortex basket cell terminals. Also required for localization of KCNA1, KCNA2, DLG4 and ADAM22 to cerebellar cortex basket cell terminal perisomatic axons and pinceaux. 4 disulfide bridges follow: cysteine 353–cysteine 437, cysteine 396–cysteine 421, cysteine 398–cysteine 405, and cysteine 507–cysteine 527. The 88-residue stretch at 448–535 (PPECGNGFVE…QCPPNLHKLD (88 aa)) folds into the Disintegrin domain. N-linked (GlcNAc...) asparagine glycans are attached at residues asparagine 609 and asparagine 677. Cystine bridges form between cysteine 681–cysteine 696, cysteine 690–cysteine 702, and cysteine 704–cysteine 713. Residues 681–713 (CPGSGERRICSHHGVCSNEGKCICQPDWTGKDC) form the EGF-like domain. The helical transmembrane segment at 739 to 759 (IIIGSIAGAVLVAAIVLGGTG) threads the bilayer. Topologically, residues 760–773 (WGFKNIRRGRSGGA) are cytoplasmic.

In terms of assembly, interacts with LGI1 and LGI4. Interacts with KCNA1/KV1.1, KCNA2/KV1.2, DLG4/PSD-95 and ADAM22. In terms of processing, the precursor is cleaved by a furin endopeptidase. As to expression, abundantly expressed in cerebellar cortex basket cell terminals and pinceaux, weakly expressed in Purkinje cells (at protein level). Weakly expressed in the heart. Abundantly in expressed in neurons throughout the central nervous system including the telencephalon, diencephalic and brainstem nuclei, cerebellum and spinal cord. Expressed in the peripheral nervous system trigeminal and dorsal root ganglia. Expressed in the ganglion and bipolar cells of the retinae and weakly in the cornea of the eyes. Expressed in the hepatocytes of the parenchyma and hepatic lobules of the liver. Expressed in distinct focal areas in the juxtamedullary cortex of the kidney. Expressed in spermatocytes in the seminiferous tubules of the testes. Expressed in the stratum spinosum of the stratified squamous epithelia of the tongue and esophagus.

The protein localises to the presynaptic cell membrane. Its subcellular location is the perikaryon. The protein resides in the cell projection. It is found in the axon. In terms of biological role, probable ligand for integrin in the brain. This is a non catalytic metalloprotease-like protein. Required for localization of the potassium channel subunit proteins KCNA1/KV1.1 and KCNA2/KV1.2 at cerebellar cortex basket cell distal terminals, is thereby involved in ephaptic inhibitory synchronization of Purkinje cell firing and response to stress. Plays a role in spatial learning and motor coordination. Involved in the nociceptive pain response to chemical-derived stimulation. This is Disintegrin and metalloproteinase domain-containing protein 11 (Adam11) from Mus musculus (Mouse).